The primary structure comprises 119 residues: RIIa domain-containing protein 1 (119 aa).

Residues Lys-70–Leu-104 enclose the RIIa domain.

As to expression, abundant in tissues rich in highly ciliated cells, such as testis, trachea and olfactory epithelium.

This chain is RIIa domain-containing protein 1 (Riiad1), found in Mus musculus (Mouse).